Here is a 128-residue protein sequence, read N- to C-terminus: Disintegrin lebein-2-alpha (128 aa).

The signal sequence occupies residues 1 to 20 (MIQVLLVTICLAVFPFHGSS). Positions 21 to 46 (IILESGNVNDYEVVYPKKVTLLPTGA) are excised as a propeptide. One can recognise a Disintegrin domain in the interval 47–111 (MNSANPCCDP…SDCPRNPWKS (65 aa)). 4 disulfides stabilise this stretch: cysteine 53–cysteine 76, cysteine 67–cysteine 73, cysteine 72–cysteine 97, and cysteine 85–cysteine 104. A Cell attachment site; atypical (MLD) motif is present at residues 89–91 (MLD). Positions 112-128 (EEDEMKWSATAKGSVLM) are excised as a propeptide.

It belongs to the disintegrin family. Dimeric disintegrin subfamily. As to quaternary structure, heterodimer with subunit beta; disulfide-linked. In terms of tissue distribution, expressed by the venom gland.

The protein localises to the secreted. Its function is as follows. Inhibits ADP-induced human platelet aggregation. Antagonist of alpha-IIb/beta-3 (ITGA2B/ITGB3). Also avidly binds to the laminin-binding beta-1 integrins (alpha-3/beta-1 (ITGA3/ITGB1), alpha-6/beta-1 (ITGA6/ITGB1), and alpha-7/beta-1 (ITGA7/ITGB1)) in an RGD-independent manner. The sequence is that of Disintegrin lebein-2-alpha from Macrovipera lebetinus (Levantine viper).